Here is a 500-residue protein sequence, read N- to C-terminus: L-arabinose isomerase (500 aa).

Glutamate 306, glutamate 333, histidine 349, and histidine 448 together coordinate Mn(2+).

Belongs to the arabinose isomerase family. It depends on Mn(2+) as a cofactor.

The catalysed reaction is beta-L-arabinopyranose = L-ribulose. It participates in carbohydrate degradation; L-arabinose degradation via L-ribulose; D-xylulose 5-phosphate from L-arabinose (bacterial route): step 1/3. Its function is as follows. Catalyzes the conversion of L-arabinose to L-ribulose. This is L-arabinose isomerase from Shewanella sp. (strain MR-4).